Consider the following 146-residue polypeptide: Urease accessory protein UreE 1 (146 aa).

It belongs to the UreE family.

It is found in the cytoplasm. Involved in urease metallocenter assembly. Binds nickel. Probably functions as a nickel donor during metallocenter assembly. The sequence is that of Urease accessory protein UreE 1 from Pseudomonas syringae pv. tomato (strain ATCC BAA-871 / DC3000).